A 1941-amino-acid polypeptide reads, in one-letter code: Myosin light chain kinase, smooth muscle (1941 aa).

Ig-like C2-type domains lie at 33–122 and 156–244; these read PAFI…VELT and PKFA…AELS. Residues Cys177 and Cys228 are joined by a disulfide bond. Tyr226 carries the post-translational modification Phosphotyrosine; by ABL1. Residues 255–329 form a disordered region; that stretch reads AVRGTKAPSP…RKVPQSSILQ (75 aa). Polar residues predominate over residues 286-305; the sequence is NCPSPQRSGSSARATNSHLK. Phosphoserine is present on Ser295. Positions 306–320 are enriched in basic and acidic residues; sequence SPQEPKPKLCEDAPR. Ser333 and Ser355 each carry phosphoserine. Ig-like C2-type domains lie at 402-485, 502-587, 611-699, and 709-809; these read PRFE…GQVS, PSFS…ATVT, PIFL…AVLT, and PWFI…APPR. 2 cysteine pairs are disulfide-bonded: Cys423/Cys475 and Cys523/Cys571. Position 452 is a phosphotyrosine; by ABL1 and SRC (Tyr452). The cysteines at positions 730 and 793 are disulfide-linked. Tyr780 is subject to Phosphotyrosine; by ABL1. Repeat copies occupy residues 856–883, 884–911, 912–939, and 940–966. Residues 856 to 985 are 5 X 28 AA approximate tandem repeats; that stretch reads DVRGLLKRRV…KKSPSENGGN (130 aa). The segment at 911–951 is actin-binding (calcium/calmodulin-sensitive); it reads MDFRANLQRQVKPKTISEEERKVHSPQQVDFRSVLAKKGTP. Residues 920–1120 form a disordered region; it reads QVKPKTISEE…KRPESQGSAP (201 aa). Position 935 is a phosphoserine (Ser935). The calmodulin-binding stretch occupies residues 936–951; it reads PQQVDFRSVLAKKGTP. One copy of the 1-5; truncated repeat lies at 967–985; that stretch reads DFRSVLGGKKKSPSENGGN. 5 repeat units span residues 990–1002, 1003–1014, 1015–1026, 1027–1038, and 1039–1049. The segment at 990 to 1049 is 5 X 12 AA approximate tandem repeats; sequence LNVKAGESPTPAGDAQAIGALKPVGNAKPAETPKPIGNAKPTETLKPVGNTKPAETLKPI. The segment at 1048-1482 is actin-binding (calcium/calmodulin-insensitive); that stretch reads PIANAQPSGS…TVTVNTEQKV (435 aa). Positions 1052 to 1065 are enriched in polar residues; the sequence is AQPSGSLKPVTNAQ. Residues 1085–1099 show a composition bias toward basic and acidic residues; it reads AGKEEVKEVKNDVNC. The region spanning 1120-1208 is the Ig-like C2-type 7 domain; that stretch reads PVFKEKLQDV…GQAECSCQVT (89 aa). Cys1141 and Cys1192 are joined by a disulfide. A disordered region spans residues 1212 to 1257; that stretch reads AQTSENTKAPEMKSRRPKSSLPPVLGTESDATVKKKPAPKTPTKAA. The Ig-like C2-type 8 domain occupies 1260-1348; the sequence is PQIIQFPEDQ…GSRQAQVNLT (89 aa). The 94-residue stretch at 1356–1449 folds into the Fibronectin type-III domain; sequence PAGTPCASDI…ESELTAVGEK (94 aa). Residues 1435–1469 are disordered; it reads SEPSQESELTAVGEKPEEPKDEVEVSDDDEKEPEV. Positions 1453-1467 are enriched in acidic residues; it reads PKDEVEVSDDDEKEP. The residue at position 1460 (Ser1460) is a Phosphoserine. Tyr1471 is modified (phosphotyrosine; by ABL1). The Protein kinase domain occupies 1486-1741; it reads YDIEERLGSG…CTQCLQHPWL (256 aa). Residues 1492 to 1500 and Lys1515 each bind ATP; that span reads LGSGKFGQV. At Tyr1597 the chain carries Phosphotyrosine; by ABL1. Residue Asp1607 is the Proton acceptor of the active site. Tyr1657 carries the phosphotyrosine; by ABL1 modification. Positions 1733 to 1796 are calmodulin-binding; the sequence is TQCLQHPWLM…SGLSGRKSST (64 aa). Phosphoserine is present on residues Ser1781, Ser1782, Ser1794, Ser1795, and Ser1798. Residues 1789 to 1809 form a disordered region; the sequence is LSGRKSSTGSPTSPINAEKLE. Residues 1792-1803 are compositionally biased toward polar residues; it reads RKSSTGSPTSPI. Residue Thr1800 is modified to Phosphothreonine. At Ser1801 the chain carries Phosphoserine. Residues 1831–1920 form the Ig-like C2-type 9 domain; the sequence is PYFSKTIRDL…GEATCTAELI (90 aa). An intrachain disulfide couples Cys1852 to Cys1904.

This sequence belongs to the protein kinase superfamily. CAMK Ser/Thr protein kinase family. As to quaternary structure, all isoforms including Telokin bind calmodulin. Interacts with CTTN; this interaction is reduced during thrombin-induced endothelial cell (EC) contraction but is promoted by the barrier-protective agonist sphingosine 1-phosphate (S1P) within lamellipodia. A complex made of ABL1, CTTN and MYLK regulates cortical actin-based cytoskeletal rearrangement critical to sphingosine 1-phosphate (S1P)-mediated endothelial cell (EC) barrier enhancement. Binds to NAA10/ARD1. Interacts with SVIL and PTK2B/PYK2. Requires Mg(2+) as cofactor. It depends on Ca(2+) as a cofactor. In terms of processing, can probably be down-regulated by phosphorylation. Tyrosine phosphorylation by ABL1 increases kinase activity, reverses MLCK-mediated inhibition of Arp2/3-mediated actin polymerization, and enhances CTTN-binding. Phosphorylation by SRC at Tyr-452 promotes CTTN binding. The C-terminus is deglutamylated by AGTPBP1/CCP1, AGBL1/CCP4 and AGBL4/CCP6, leading to the formation of Myosin light chain kinase, smooth muscle, deglutamylated form. The consequences of C-terminal deglutamylation are unknown. As to expression, smooth muscle isoform is expressed in all tissues with highest levels in bladder, uterus, vas deferens, colon, ileum, and tracheae. Isoform 1 is expressed in lung, bladder, and vas deferens. Telokin is expressed in smooth muscle cells of the gut, reproductive tract and urinary tract, including in uterus, vas deferens, bladder, colon, kidney, ureter and ovary. Telokin is also detected in the trachea.

It is found in the cytoplasm. Its subcellular location is the cell projection. It localises to the lamellipodium. The protein localises to the cleavage furrow. The protein resides in the cytoskeleton. It is found in the stress fiber. The enzyme catalyses L-seryl-[myosin light chain] + ATP = O-phospho-L-seryl-[myosin light chain] + ADP + H(+). The catalysed reaction is L-threonyl-[myosin light chain] + ATP = O-phospho-L-threonyl-[myosin light chain] + ADP + H(+). In terms of biological role, calcium/calmodulin-dependent myosin light chain kinase implicated in smooth muscle contraction via phosphorylation of myosin light chains (MLC). Also regulates actin-myosin interaction through a non-kinase activity. Phosphorylates PTK2B/PYK2 and myosin light-chains. Involved in the inflammatory response (e.g. apoptosis, vascular permeability, leukocyte diapedesis), cell motility and morphology, airway hyperreactivity and other activities relevant to asthma. Required for tonic airway smooth muscle contraction that is necessary for physiological and asthmatic airway resistance. Necessary for gastrointestinal motility. Implicated in the regulation of endothelial as well as vascular permeability, probably via the regulation of cytoskeletal rearrangements. In the nervous system it has been shown to control the growth initiation of astrocytic processes in culture and to participate in transmitter release at synapses formed between cultured sympathetic ganglion cells. Critical participant in signaling sequences that result in fibroblast apoptosis. Plays a role in the regulation of epithelial cell survival. Required for epithelial wound healing, especially during actomyosin ring contraction during purse-string wound closure. Mediates RhoA-dependent membrane blebbing. Triggers TRPC5 channel activity in a calcium-dependent signaling, by inducing its subcellular localization at the plasma membrane. Promotes cell migration (including tumor cells) and tumor metastasis. PTK2B/PYK2 activation by phosphorylation mediates ITGB2 activation and is thus essential to trigger neutrophil transmigration during acute lung injury (ALI). May regulate optic nerve head astrocyte migration. Probably involved in mitotic cytoskeletal regulation. Regulates tight junction probably by modulating ZO-1 exchange in the perijunctional actomyosin ring. Mediates burn-induced microvascular barrier injury; triggers endothelial contraction in the development of microvascular hyperpermeability by phosphorylating MLC. Essential for intestinal barrier dysfunction. Mediates Giardia spp.-mediated reduced epithelial barrier function during giardiasis intestinal infection via reorganization of cytoskeletal F-actin and tight junctional ZO-1. Necessary for hypotonicity-induced Ca(2+) entry and subsequent activation of volume-sensitive organic osmolyte/anion channels (VSOAC) in cervical cancer cells. This is Myosin light chain kinase, smooth muscle from Mus musculus (Mouse).